A 308-amino-acid chain; its full sequence is Elongation factor Ts (308 aa).

Residues 80-83 (TDFV) form an involved in Mg(2+) ion dislocation from EF-Tu region.

The protein belongs to the EF-Ts family.

The protein localises to the cytoplasm. Associates with the EF-Tu.GDP complex and induces the exchange of GDP to GTP. It remains bound to the aminoacyl-tRNA.EF-Tu.GTP complex up to the GTP hydrolysis stage on the ribosome. The polypeptide is Elongation factor Ts (Agrobacterium fabrum (strain C58 / ATCC 33970) (Agrobacterium tumefaciens (strain C58))).